The following is a 1021-amino-acid chain: Sodium/potassium-transporting ATPase subunit alpha-1 (1021 aa).

Residues 1–5 (MGKGV) constitute a propeptide that is removed on maturation. Positions 1–11 (MGKGVGRDKYE) are enriched in basic and acidic residues. The disordered stretch occupies residues 1 to 36 (MGKGVGRDKYEPAAVSEHGDKKKAKKERDMDELKKE). At 4 to 85 (GVGRDKYEPA…NALTPPPTTP (82 aa)) the chain is on the cytoplasmic side. Position 9 is an N6-acetyllysine (lysine 9). Tyrosine 10 is modified (phosphotyrosine). The residue at position 16 (serine 16) is a Phosphoserine; by PKC. The residue at position 21 (lysine 21) is an N6-acetyllysine. The segment covering 26 to 36 (KERDMDELKKE) has biased composition (basic and acidic residues). A phosphoserine mark is found at serine 38 and serine 45. Residues 80–82 (PPP) form a phosphoinositide-3 kinase binding region. A helical transmembrane segment spans residues 86–106 (EWVKFCRQLFGGFSMLLWIGA). At 107–129 (ILCFLAYGIQAATEEEPQNDNLY) the chain is on the extracellular side. Residues 130–150 (LGVVLSAVVIITGCFSYYQEA) traverse the membrane as a helical segment. Topologically, residues 151–286 (KSSKIMESFK…GGQTPIAAEI (136 aa)) are cytoplasmic. The interval 214 to 233 (SSLTGESEPQTRSPDFTNEN) is disordered. Serine 226 carries the post-translational modification Phosphoserine. Tyrosine 258 bears the Phosphotyrosine mark. Residues 287-306 (EHFIHIITGVAVFLGVSFFI) form a helical membrane-spanning segment. The Extracellular segment spans residues 307-318 (LSLILEYTWLEA). Residues 319-336 (VIFLIGIIVANVPEGLLA) form a helical membrane-spanning segment. The Cytoplasmic segment spans residues 337 to 770 (TVTVCLTLTA…EEGRLIFDNL (434 aa)). Residue aspartate 374 is the 4-aspartylphosphate intermediate of the active site. Phosphoserine is present on residues serine 450 and serine 482. Lysine 485 provides a ligand contact to ATP. Tyrosine 540 carries the post-translational modification Phosphotyrosine. The tract at residues 594 to 715 (RAAVPDAVGK…QGAIVAVTGD (122 aa)) is mediates interaction with SCN7A. Residue lysine 659 is modified to N6-succinyllysine. Phosphoserine occurs at positions 666 and 673. 2 residues coordinate Mg(2+): aspartate 715 and aspartate 719. The helical transmembrane segment at 771-790 (KKSIAYTLTSNIPEITPFLI) threads the bilayer. The Extracellular segment spans residues 791–800 (FIIANIPLPL). Residues 801-821 (GTVTILCIDLGTDMVPAISLA) traverse the membrane as a helical segment. Residues 822–841 (YEQAESDIMKRQPRNPKTDK) lie on the Cytoplasmic side of the membrane. The helical transmembrane segment at 842–864 (LVNERLISMAYGQIGMIQALGGF) threads the bilayer. Residues 865 to 916 (FTYFVILAENGFLPTHLLGLRVDWDDRWINDVEDSYGQQWTYEQRKIVEFTC) lie on the Extracellular side of the membrane. The chain crosses the membrane as a helical span at residues 917 to 936 (HTAFFVSIVVVQWADLVICK). Topologically, residues 937–949 (TRRNSVFQQGMKN) are cytoplasmic. Serine 941 is subject to Phosphoserine; by PKA. The chain crosses the membrane as a helical span at residues 950-968 (KILIFGLFEETALAAFLSY). Over 969–983 (CPGMGVALRMYPLKP) the chain is Extracellular. The chain crosses the membrane as a helical span at residues 984-1004 (TWWFCAFPYSLLIFVYDEVRK). Topologically, residues 1005 to 1021 (LIIRRRPGGWVEKETYY) are cytoplasmic.

The protein belongs to the cation transport ATPase (P-type) (TC 3.A.3) family. Type IIC subfamily. As to quaternary structure, the sodium/potassium-transporting ATPase is composed of a catalytic alpha subunit, an auxiliary non-catalytic beta subunit and an additional regulatory subunit. Interacts with regulatory subunit FXYD1. Interacts with regulatory subunit FXYD3. Interacts with SIK1. Interacts with SLC35G1 and STIM1. Interacts with CLN3; this interaction regulates the sodium/potassium-transporting ATPase complex localization at the plasma membrane. Interacts with SCN7A; activates ATP1A1 P-type sodium:potassium-exchanging transporter activity which indirectly signals to nearby neurons to regulate sodium homeostasis. Post-translationally, phosphorylation on Tyr-10 modulates pumping activity. Phosphorylation of Ser-941 by PKA modulates the response of ATP1A1 to PKC. Dephosphorylation by protein phosphatase 2A (PP2A) following increases in intracellular sodium, leading to increase catalytic activity.

It is found in the cell membrane. The protein localises to the basolateral cell membrane. Its subcellular location is the sarcolemma. The protein resides in the cell projection. It localises to the axon. It is found in the melanosome. The enzyme catalyses K(+)(out) + Na(+)(in) + ATP + H2O = K(+)(in) + Na(+)(out) + ADP + phosphate + H(+). In terms of biological role, this is the catalytic component of the active enzyme, which catalyzes the hydrolysis of ATP coupled with the exchange of sodium and potassium ions across the plasma membrane. This action creates the electrochemical gradient of sodium and potassium ions, providing the energy for active transport of various nutrients. Could also be part of an osmosensory signaling pathway that senses body-fluid sodium levels and controls salt intake behavior as well as voluntary water intake to regulate sodium homeostasis. The sequence is that of Sodium/potassium-transporting ATPase subunit alpha-1 (ATP1A1) from Canis lupus familiaris (Dog).